The sequence spans 247 residues: Coiled-coil domain-containing protein 124 homolog (247 aa).

The interval 1–146 is disordered; it reads MGGKKFGTNS…TTTTGSDDHE (146 aa). A coiled-coil region spans residues 8-85; it reads TNSKAEEARS…QEDKEIKERY (78 aa). Basic and acidic residues predominate over residues 11–114; it reads KAEEARSKKA…EQKQREKELA (104 aa). Positions 122-140 are enriched in low complexity; sequence VVVVPTTTTTTTTTTTTTT.

It belongs to the CCDC124 family. Associates with translationally inactive ribosomes in the nonrotated state.

Its function is as follows. Ribosome-binding protein involved in ribosome hibernation: associates with translationally inactive ribosomes and stabilizes the nonrotated conformation of the 80S ribosome, thereby promoting ribosome preservation and storage. The protein is Coiled-coil domain-containing protein 124 homolog of Dictyostelium discoideum (Social amoeba).